Here is a 355-residue protein sequence, read N- to C-terminus: Chemerin-like receptor 2 (355 aa).

The Extracellular portion of the chain corresponds to 1 to 41 (MEDLEETLFEEFENYSYDLDYYSLESDLEEKVQLGVVHWVS). N14 carries an N-linked (GlcNAc...) asparagine glycan. A helical transmembrane segment spans residues 42 to 62 (LVLYCLAFVLGIPGNAIVIWF). The Cytoplasmic segment spans residues 63 to 73 (TGFKWKKTVTT). The chain crosses the membrane as a helical span at residues 74–94 (LWFLNLAIADFIFLLFLPLYI). Residues 95–112 (SYVAMNFHWPFGIWLCKA) lie on the Extracellular side of the membrane. An intrachain disulfide couples C110 to C187. Residues 113-133 (NSFTAQLNMFASVFFLTVISL) form a helical membrane-spanning segment. Over 134–154 (DHYIHLIHPVLSHRHRTLKNS) the chain is Cytoplasmic. The helical transmembrane segment at 155–175 (LIVIIFIWLLASLIGGPALYF) threads the bilayer. Residues 176-210 (RDTVEFNNHTLCYNNFQKHDPDLTLIRHHVLTWVK) lie on the Extracellular side of the membrane. A helical membrane pass occupies residues 211–231 (FIIGYLFPLLTMSICYLCLIF). The Cytoplasmic portion of the chain corresponds to 232 to 247 (KVKKRSILISSRHFWT). Residues 248–268 (ILVVVVAFVVCWTPYHLFSIW) traverse the membrane as a helical segment. Over 269 to 286 (ELTIHHNSYSHHVMQAGI) the chain is Extracellular. The chain crosses the membrane as a helical span at residues 287–307 (PLSTGLAFLNSCLNPILYVLI). At 308-355 (SKKFQARFRSSVAEILKYTLWEVSCSGTVSEQLRNSETKNLCLLETAQ) the chain is on the cytoplasmic side.

The protein belongs to the chemokine-like receptor (CMKLR) family. In terms of tissue distribution, expressed in hippocampus.

The protein localises to the cell membrane. In terms of biological role, receptor for chemoattractant adipokine chemerin/RARRES2 suggesting a role for this receptor in the regulation of inflammation and energy homesotasis. Signals mainly via beta-arrestin pathway. Binding of RARRES2 activates weakly G proteins, calcium mobilization and MAPK1/MAPK3 (ERK1/2) phosphorylation too. Also acts as a receptor for TAFA1, mediates its effects on neuronal stem-cell proliferation and differentiation via the activation of ROCK/ERK and ROCK/STAT3 signaling pathway. Its function is as follows. (Microbial infection) Coreceptor for HIV-1. This is Chemerin-like receptor 2 from Homo sapiens (Human).